Consider the following 183-residue polypeptide: Ribosome maturation factor RimM (183 aa).

A PRC barrel domain is found at Ala-105–Leu-181.

This sequence belongs to the RimM family. Binds ribosomal protein uS19.

It is found in the cytoplasm. Functionally, an accessory protein needed during the final step in the assembly of 30S ribosomal subunit, possibly for assembly of the head region. Essential for efficient processing of 16S rRNA. May be needed both before and after RbfA during the maturation of 16S rRNA. It has affinity for free ribosomal 30S subunits but not for 70S ribosomes. This Thermosynechococcus vestitus (strain NIES-2133 / IAM M-273 / BP-1) protein is Ribosome maturation factor RimM.